The primary structure comprises 249 residues: MIRYKAIISYDGTNFSGFQRQPQVRTVQEEIEKTLLRLNSGQAVKIHGAGRTDAGVHAYGQVIHFDLPQQRDLEKLRFGLDTQTPDDIDVIQVEQVADDFHARYQKHRKTYEFLVDLGRPKNPLMRHYATHFPYKVDFSVVKAAIKKLRGTHDFTGFTASGTSVENKVRTISRATVEKDDKTGFLIFTFTGSGFLYKQVRNMVGTLLKIGNGRMPIDQIDRILESGDRSLAGPTAASNGLYLKEIIYDD.

Residue aspartate 53 is the Nucleophile of the active site. Tyrosine 111 contributes to the substrate binding site.

The protein belongs to the tRNA pseudouridine synthase TruA family. Homodimer.

It carries out the reaction uridine(38/39/40) in tRNA = pseudouridine(38/39/40) in tRNA. Functionally, formation of pseudouridine at positions 38, 39 and 40 in the anticodon stem and loop of transfer RNAs. This is tRNA pseudouridine synthase A from Streptococcus mutans serotype c (strain ATCC 700610 / UA159).